The chain runs to 1322 residues: Transcription elongation factor SPT6-like (1322 aa).

Positions 1-17 (MNRIDEEPQIHEDPVEN) are enriched in basic and acidic residues. Disordered regions lie at residues 1–65 (MNRI…KKDE) and 90–113 (KRLK…DLSH). The span at 18-33 (REEDDEDEDDQYEFDD) shows a compositional bias: acidic residues. Residues 48–65 (EQRHCSEKKSRSRRKKDE) are compositionally biased toward basic and acidic residues. Residues 97–110 (EEEDKINNDDDDDD) are compositionally biased toward acidic residues. An S1 motif domain is found at 1017–1088 (GRIVQATVKK…QRYHVLLVCK (72 aa)).

The protein belongs to the SPT6 family.

The protein resides in the nucleus. In terms of biological role, transcription elongation factor that enhances the transcription elongation by RNA polymerase II (RNAPII). This is Transcription elongation factor SPT6-like from Arabidopsis thaliana (Mouse-ear cress).